Here is a 184-residue protein sequence, read N- to C-terminus: Peptide deformylase (184 aa).

Fe cation-binding residues include cysteine 111 and histidine 154. The active site involves glutamate 155. Residue histidine 158 participates in Fe cation binding.

This sequence belongs to the polypeptide deformylase family. Fe(2+) is required as a cofactor.

It catalyses the reaction N-terminal N-formyl-L-methionyl-[peptide] + H2O = N-terminal L-methionyl-[peptide] + formate. Removes the formyl group from the N-terminal Met of newly synthesized proteins. Requires at least a dipeptide for an efficient rate of reaction. N-terminal L-methionine is a prerequisite for activity but the enzyme has broad specificity at other positions. This Lacticaseibacillus casei (strain BL23) (Lactobacillus casei) protein is Peptide deformylase.